The following is a 1039-amino-acid chain: Translation initiation factor IF-2 (1039 aa).

Disordered regions lie at residues 39–347 (TISE…KWQE) and 400–452 (ARPP…PEKV). The span at 103–125 (RNTTSNAPEASVANNQIASSEAN) shows a compositional bias: polar residues. Residues 157–176 (PQKPAAPEAEPEAQSQAPAK) show a composition bias toward low complexity. Basic and acidic residues-rich tracts occupy residues 178 to 197 (AVEK…ERQP) and 226 to 243 (PILK…DQAK). Residues 408–423 (ARSASAATAAPISSPT) are compositionally biased toward low complexity. The segment covering 432–451 (NNRDQNRRQETEVKRERPEK) has biased composition (basic and acidic residues). Residues 533-706 (RRPPVVTIMG…LLVAEVGELS (174 aa)) enclose the tr-type G domain. Positions 542–549 (GHVDHGKT) are G1. Residue 542 to 549 (GHVDHGKT) coordinates GTP. A G2 region spans residues 567–571 (GITQH). Residues 592–595 (DTPG) form a G3 region. GTP-binding positions include 592–596 (DTPGH) and 646–649 (NKID). The tract at residues 646 to 649 (NKID) is G4. Residues 682–684 (SAI) form a G5 region.

Belongs to the TRAFAC class translation factor GTPase superfamily. Classic translation factor GTPase family. IF-2 subfamily.

The protein localises to the cytoplasm. In terms of biological role, one of the essential components for the initiation of protein synthesis. Protects formylmethionyl-tRNA from spontaneous hydrolysis and promotes its binding to the 30S ribosomal subunits. Also involved in the hydrolysis of GTP during the formation of the 70S ribosomal complex. This chain is Translation initiation factor IF-2, found in Nostoc sp. (strain PCC 7120 / SAG 25.82 / UTEX 2576).